The primary structure comprises 228 residues: Cell surface Cu-only superoxide dismutase 5 (228 aa).

Residues 1–15 form the signal peptide; that stretch reads MKYLSIFLLATFALA. Residue Asn53 is glycosylated (N-linked (GlcNAc...) asparagine). Cu cation contacts are provided by His75 and His77. A glycan (N-linked (GlcNAc...) asparagine) is linked at Asn86. A disulfide bridge links Cys87 with Cys162. His93 lines the Cu cation pocket. Asn98 is a glycosylation site (N-linked (GlcNAc...) asparagine). His153 lines the Cu cation pocket. N-linked (GlcNAc...) asparagine glycosylation is found at Asn156, Asn164, Asn176, Asn181, and Asn192. Positions 176-201 are enriched in low complexity; it reads NTTMSNSSSSSSQSAVNTSSSMASTA. A disordered region spans residues 176 to 204; the sequence is NTTMSNSSSSSSQSAVNTSSSMASTAPQG. The GPI-anchor amidated asparagine moiety is linked to residue Asn205. Residues 206 to 228 constitute a propeptide, removed in mature form; sequence GAERAVVNGLLAAGVVGVIAALI.

This sequence belongs to the Cu-Zn superoxide dismutase family. As to quaternary structure, monomer. Requires Cu cation as cofactor. Post-translationally, the GPI-anchor is attached to the protein in the endoplasmic reticulum and serves to target the protein to the cell surface. There, the glucosamine-inositol phospholipid moiety is cleaved off and the GPI-modified mannoprotein is covalently attached via its lipidless GPI glycan remnant to the 1,6-beta-glucan of the outer cell wall layer.

It localises to the secreted. Its subcellular location is the cell wall. The protein localises to the membrane. It catalyses the reaction 2 superoxide + 2 H(+) = H2O2 + O2. Secreted in a disulfide-oxidized form and apo-pools of secreted SOD5 can readily capture extracellular copper for rapid induction of enzyme activity. Functionally, superoxide dismutases serve to convert damaging superoxide radicals, a key form of ROS, to less damaging hydrogen peroxide that can be converted into water by catalase action. Degrades host-derived reactive oxygen species to escape innate immune surveillance. Involved in the occurrence of miconazole-tolerant persisters in biofilms. Persisters are cells that survive high doses of an antimicrobial agent. The unusual attributes of SOD5-like fungal proteins, including the absence of zinc and an open active site that readily captures extracellular copper, make these SODs well suited to meet challenges in zinc and copper availability at the host-pathogen interface. The protein is Cell surface Cu-only superoxide dismutase 5 (SOD5) of Candida albicans (strain SC5314 / ATCC MYA-2876) (Yeast).